Here is a 34-residue protein sequence, read N- to C-terminus: Photosystem II reaction center protein Psb30 (34 aa).

The chain crosses the membrane as a helical span at residues 6–26 (VIAQLVSLGVIVLVGPAVIIL).

This sequence belongs to the Psb30/Ycf12 family. As to quaternary structure, PSII is composed of 1 copy each of membrane proteins PsbA, PsbB, PsbC, PsbD, PsbE, PsbF, PsbH, PsbI, PsbJ, PsbK, PsbL, PsbM, PsbT, PsbX, PsbY, PsbZ, Psb30/Ycf12, peripheral proteins of the oxygen-evolving complex and a large number of cofactors. It forms dimeric complexes.

The protein resides in the plastid. It localises to the chloroplast thylakoid membrane. Functionally, a core subunit of photosystem II (PSII), probably helps stabilize the reaction center. The chain is Photosystem II reaction center protein Psb30 from Pyropia yezoensis (Susabi-nori).